The sequence spans 74 residues: Conotoxin Cal27 (74 aa).

The N-terminal stretch at 1 to 19 (MSGTGVLLLTLLLLVAMAA) is a signal peptide.

In terms of processing, may contain 4 disulfide bonds. Expressed by the venom duct.

It localises to the secreted. Functionally, probable neurotoxin. The sequence is that of Conotoxin Cal27 from Californiconus californicus (California cone).